Consider the following 240-residue polypeptide: Endo-chitosanase B (240 aa).

Positions 1–17 (MRLSEILAVALVTGATA) are cleaved as a signal peptide. Residue Asn86 is glycosylated (N-linked (GlcNAc...) asparagine).

It belongs to the glycosyl hydrolase 75 family.

The protein resides in the secreted. It catalyses the reaction Endohydrolysis of beta-(1-&gt;4)-linkages between D-glucosamine residues in a partly acetylated chitosan.. Its function is as follows. Chitosanase catalyzing the endo-type cleavage of chitosan, the deacylated form of chitin. Chitosanase may be crucial in the degradation of the deacetylated portion of chitin in the fungal cell wall. Chitoolisaccharides produced by the hydrolysis of partially N-acetylated chitosan are known to have many biological activities, including antibacterial activity, immune-enhancing effects, and elicitor activity. The protein is Endo-chitosanase B (csnB) of Aspergillus oryzae (Yellow koji mold).